We begin with the raw amino-acid sequence, 452 residues long: Tryptophan biosynthesis protein TrpCF (452 aa).

Residues 1–256 (MQTVLAKIVA…AAVRRVLLGE (256 aa)) are indole-3-glycerol phosphate synthase. Residues 257 to 452 (NKVCGLTRAQ…ASVFQTLRAY (196 aa)) form an N-(5'-phosphoribosyl)anthranilate isomerase region.

In the N-terminal section; belongs to the TrpC family. This sequence in the C-terminal section; belongs to the TrpF family. As to quaternary structure, monomer.

It catalyses the reaction N-(5-phospho-beta-D-ribosyl)anthranilate = 1-(2-carboxyphenylamino)-1-deoxy-D-ribulose 5-phosphate. The catalysed reaction is 1-(2-carboxyphenylamino)-1-deoxy-D-ribulose 5-phosphate + H(+) = (1S,2R)-1-C-(indol-3-yl)glycerol 3-phosphate + CO2 + H2O. The protein operates within amino-acid biosynthesis; L-tryptophan biosynthesis; L-tryptophan from chorismate: step 3/5. It participates in amino-acid biosynthesis; L-tryptophan biosynthesis; L-tryptophan from chorismate: step 4/5. Bifunctional enzyme that catalyzes two sequential steps of tryptophan biosynthetic pathway. The first reaction is catalyzed by the isomerase, coded by the TrpF domain; the second reaction is catalyzed by the synthase, coded by the TrpC domain. In Salmonella typhi, this protein is Tryptophan biosynthesis protein TrpCF (trpC).